The sequence spans 163 residues: Nucleotide-binding protein YajQ (163 aa).

Belongs to the YajQ family.

Nucleotide-binding protein. This is Nucleotide-binding protein YajQ from Salmonella typhi.